Reading from the N-terminus, the 424-residue chain is Ribulose bisphosphate carboxylase (424 aa).

The active-site Proton acceptor is K159. A substrate-binding site is contributed by K161. 3 residues coordinate Mg(2+): K185, D187, and E188. The residue at position 185 (K185) is an N6-carboxylysine. H277 functions as the Proton acceptor in the catalytic mechanism. Substrate is bound by residues R278, H310, 347-349, and 369-372; these read SGG and QAGG.

The protein belongs to the RuBisCO large chain family. Type III subfamily. As to quaternary structure, homodimer or homodecamer. In contrast to form I RuBisCO, the form III RuBisCO is composed solely of large subunits. Requires Mg(2+) as cofactor.

It carries out the reaction 2 (2R)-3-phosphoglycerate + 2 H(+) = D-ribulose 1,5-bisphosphate + CO2 + H2O. The enzyme catalyses D-ribulose 1,5-bisphosphate + O2 = 2-phosphoglycolate + (2R)-3-phosphoglycerate + 2 H(+). Its function is as follows. Catalyzes the addition of molecular CO(2) and H(2)O to ribulose 1,5-bisphosphate (RuBP), generating two molecules of 3-phosphoglycerate (3-PGA). Functions in an archaeal AMP degradation pathway, together with AMP phosphorylase and R15P isomerase. The protein is Ribulose bisphosphate carboxylase of Pyrococcus abyssi (strain GE5 / Orsay).